We begin with the raw amino-acid sequence, 904 residues long: Polycystin-2 (904 aa).

The disordered stretch occupies residues 1 to 102; it reads MSSSRVRPQA…SSSGGVPGNF (102 aa). At 1–155 the chain is on the cytoplasmic side; it reads MSSSRVRPQA…NSNREMYLKT (155 aa). Low complexity predominate over residues 8–20; it reads PQAPQSPAASASA. Residues 26 to 38 are compositionally biased toward basic and acidic residues; the sequence is EGIEMEKMHHEEV. The span at 86-96 shows a compositional bias: low complexity; sequence SVSTTSSSSSG. A helical transmembrane segment spans residues 156–177; that stretch reads VLREMITYILFLLTLCIITYGM. Residues 178–404 lie on the Extracellular side of the membrane; that stretch reads VSTNMYYYTK…TVRLLRYVSS (227 aa). N-linked (GlcNAc...) asparagine glycans are attached at residues Asn235, Asn241, and Asn264. A disulfide bond links Cys267 and Cys280. N-linked (GlcNAc...) asparagine glycosylation occurs at Asn298. Residues 405-425 traverse the membrane as a helical segment; that stretch reads WDYFVGMCEVSFCLFVLYYLV. Topologically, residues 426-441 are cytoplasmic; that stretch reads EEALEIRLHRLRYFKS. A helical transmembrane segment spans residues 442–462; sequence LWNCLDVLIVALSVPAIIMNI. Residues 463–489 are Extracellular-facing; the sequence is CRTSAVSHRLHFLLENHSTYPNFEPLA. The N-linked (GlcNAc...) asparagine glycan is linked to Asn478. A helical transmembrane segment spans residues 490-510; that stretch reads RLQVHFNNLAAIIVFLSWVKL. The Cytoplasmic segment spans residues 511–534; that stretch reads FKFINFNKTMNQLSTTMSRCAKDL. A helical transmembrane segment spans residues 535 to 556; the sequence is MGFAIMFFIVFLAYAQLAYLVF. Topologically, residues 557-568 are extracellular; that stretch reads GTQVNDFSTFQA. The pore-forming intramembrane region spans 569–583; sequence CIFTQFRIILGDFDF. Ca(2+) is bound at residue Leu578. Residues 578–580 carry the Selectivity filter motif; sequence LGD. The Extracellular portion of the chain corresponds to 584–591; that stretch reads SEIEEADS. A helical transmembrane segment spans residues 592 to 612; the sequence is VLGPIYFTTFVFFIFMILLNM. Residues 613–904 lie on the Cytoplasmic side of the membrane; that stretch reads FLAIINDTYS…DAAASGPAHL (292 aa). The region spanning 687 to 722 is the EF-hand 1 domain; it reads HSDAEIEAIFAKYDLDGDQELTEHEHQQMRDDLEKE. Residues Asp700, Asp702, Asp704, Glu706, and Glu711 each contribute to the Ca(2+) site. Residues 708–732 are compositionally biased toward basic and acidic residues; the sequence is TEHEHQQMRDDLEKEREDLDLEHSS. Disordered stretches follow at residues 708–770 and 854–904; these read TEHE…SSGG and ESDD…PAHL. The linker stretch occupies residues 740–759; the sequence is RSFSRSQDDSEEDDDEDSGH. In terms of domain architecture, EF-hand 2 spans 768–786; the sequence is SGGVSYEEFQVLVRRVDRM. Residues 770–809 are a coiled coil; it reads GVSYEEFQVLVRRVDRMEHSIGSIVSKIDAVIVKLEAMER. Low complexity predominate over residues 878–890; that stretch reads LRPRSSRPPSSLS.

Belongs to the polycystin family. Homotetramer. Component of the heterotetrameric polycystin channel complex with pkd1; the tetramer contains one pkd1 chain and three pkd2 chains. Interacts with pkd1l1. Phosphorylated. Phosphorylation is important for protein function; a mutant human construct that lacks the N-terminal phosphorylation sites cannot complement a zebrafish pkd2-deficient mutant. In terms of processing, N-glycosylated. The four subunits in a tetramer probably differ in the extent of glycosylation; simultaneous glycosylation of all experimentally validated sites would probably create steric hindrance. Post-translationally, sumoylated by SUMO1; sumoylation regulates PKD2 membrane recycling. Detected along cilia and at the cilium basal body in Kupffer's vesicle at the 10 somite stage. Detected in heart at 48hpf. Detected in muscle and pronephric kidney at 48 hpf. Detected on trunk muscle sarcolemma and sarcomere, on ependymal cell cilia in brain, at the apical cell membrane in epithelial cells in the ear, at the lateral line organ and olfactory placode at 56 hpf. Detected in adult kidney (at protein level).

The protein localises to the basolateral cell membrane. The protein resides in the cell membrane. It is found in the sarcolemma. Its subcellular location is the cytoplasm. It localises to the myofibril. The protein localises to the sarcomere. The protein resides in the sarcoplasmic reticulum membrane. It is found in the apical cell membrane. Its subcellular location is the endoplasmic reticulum membrane. It localises to the cell projection. The protein localises to the cilium. The protein resides in the cytoskeleton. It is found in the cilium basal body. Its subcellular location is the cytoplasmic vesicle membrane. The enzyme catalyses K(+)(in) = K(+)(out). It carries out the reaction Na(+)(in) = Na(+)(out). The catalysed reaction is Ca(2+)(in) = Ca(2+)(out). Channel activity is regulated by phosphorylation. Channel activity is regulated by intracellular Ca(2+). Forms a nonselective cation channel. Can function as a homotetrameric ion channel or can form heteromer with PKD1. Displays distinct function depending on its subcellular localization and regulation by its binding partners. In the primary cilium functions as a cation channel, with a preference for monovalent cations over divalent cations that allows K(+), Na(+) and Ca(2+) influx, with low selectivity for Ca(2+). In the endoplasmic reticulum, likely functions as a K(+) channel to facilitate Ca(2+) release. Required for normal oscillation of Ca(2+) levels within cilia; these oscillations of the intraciliary Ca(2+) levels can trigger cytoplasmic Ca(2+) signaling cascades. Required for normal temporal variation of the intracellular Ca(2+) levels in the heart. Plays a role in fluid-flow mechanosensation. Required for normal specification of the body left-right axis during embryogenesis, most likely via its role in ciliary Ca(2+) oscillations in Kupffer's vesicle. This Danio rerio (Zebrafish) protein is Polycystin-2.